The following is a 189-amino-acid chain: RxLR effector protein CRE18 (189 aa).

The N-terminal stretch at 1–23 (MSKLFYAFAVLAVHVLTSSPTTA) is a signal peptide. The RxLR-dEER motif lies at 47–68 (RFLRSIHEGEDSLKPSAFSEER).

It belongs to the RxLR effector family.

It is found in the secreted. Its subcellular location is the host cytoplasm. The protein localises to the host nucleus. In terms of biological role, effector that is involved in host plant infection. Contributes to virulence during the early infection stage, by inhibiting plant defense responses induced by both PAMP-triggered immunity (PTI) and effector-triggered immunity (ETI). The polypeptide is RxLR effector protein CRE18 (Phytophthora infestans (strain T30-4) (Potato late blight agent)).